The sequence spans 422 residues: G-protein coupled receptor 151 protein (422 aa).

Topologically, residues 1 to 45 (MGKAMLRAGFADTNSSNMNESFARLHFAGGYLPSDSKDWRTIIPS) are extracellular. Residues asparagine 14 and asparagine 19 are each glycosylated (N-linked (GlcNAc...) asparagine). Residues 46 to 66 (LLMAVCLVGLVGNLCVIGILL) traverse the membrane as a helical segment. Residues 67 to 76 (HGVWKRKPST) are Cytoplasmic-facing. Residues 77–97 (IHSLILNLSLADFSLLLFSAP) form a helical membrane-spanning segment. The Extracellular portion of the chain corresponds to 98–123 (VRAAAYSKGVWDLGWFICKSSDWFTH). Residues cysteine 115 and cysteine 191 are joined by a disulfide bond. A helical membrane pass occupies residues 124–144 (VCMAAKSLTFVVVAKACFAYA). The Cytoplasmic portion of the chain corresponds to 145–157 (SDPAKQESIHSRT). The chain crosses the membrane as a helical span at residues 158–178 (IWSVLAGIWVVASLLPLPEWL). The Extracellular segment spans residues 179-205 (FSTTRRHAGVEMCLVDVPAVAEEFMSM). A helical membrane pass occupies residues 206–226 (FGKLYPLLVFCLPLLLAGVYF). The Cytoplasmic portion of the chain corresponds to 227–259 (WRAYDQCKTRCTKTRNLRDQMRSKQLTVMLLST). Residues 260-280 (AIISALLWLPEWIAWLWVWHV) form a helical membrane-spanning segment. At 281–290 (KAGGPMPPQG) the chain is on the extracellular side. The helical transmembrane segment at 291 to 311 (FIALSQVLMFFTSTANPLIFL) threads the bilayer. At 312 to 422 (VMSEEFKAGL…HEGQETEGCN (111 aa)) the chain is on the cytoplasmic side. The tract at residues 339–422 (VQEAPAGNTE…HEGQETEGCN (84 aa)) is disordered. Basic and acidic residues predominate over residues 366 to 380 (TDGRGSPDDSKEKSG).

High expression in the brain and lower levels in kidney and liver. In the nervous system expressed specifically in the habenular area (at protein level).

It is found in the cell membrane. Functionally, proton-sensing G-protein coupled receptor. The chain is G-protein coupled receptor 151 protein (Gpr151) from Mus musculus (Mouse).